Consider the following 261-residue polypeptide: Thiazole synthase (261 aa).

K102 functions as the Schiff-base intermediate with DXP in the catalytic mechanism. 1-deoxy-D-xylulose 5-phosphate is bound by residues G163, 189 to 190 (AG), and 211 to 212 (NT).

The protein belongs to the ThiG family. In terms of assembly, homotetramer. Forms heterodimers with either ThiH or ThiS.

Its subcellular location is the cytoplasm. The enzyme catalyses [ThiS sulfur-carrier protein]-C-terminal-Gly-aminoethanethioate + 2-iminoacetate + 1-deoxy-D-xylulose 5-phosphate = [ThiS sulfur-carrier protein]-C-terminal Gly-Gly + 2-[(2R,5Z)-2-carboxy-4-methylthiazol-5(2H)-ylidene]ethyl phosphate + 2 H2O + H(+). The protein operates within cofactor biosynthesis; thiamine diphosphate biosynthesis. Functionally, catalyzes the rearrangement of 1-deoxy-D-xylulose 5-phosphate (DXP) to produce the thiazole phosphate moiety of thiamine. Sulfur is provided by the thiocarboxylate moiety of the carrier protein ThiS. In vitro, sulfur can be provided by H(2)S. The sequence is that of Thiazole synthase from Myxococcus xanthus (strain DK1622).